The primary structure comprises 674 residues: Penicillin-binding protein activator LpoA (674 aa).

An N-terminal signal peptide occupies residues 1-31 (MLSSTFVRTKAGRSKPVRLTAVIAAALFLAG). Cys-32 is lipidated: N-palmitoyl cysteine. Cys-32 carries the S-diacylglycerol cysteine lipid modification. Residues 291–349 (GVTPSTPVQQQQPASVPEQAAQPASTDPNANGAVSTSAPDAAPVTAAQPSAPSTAPITP) are disordered. Residues 292–315 (VTPSTPVQQQQPASVPEQAAQPAS) are compositionally biased toward low complexity. Residues 316 to 328 (TDPNANGAVSTSA) show a composition bias toward polar residues. A compositionally biased stretch (low complexity) spans 331–349 (AAPVTAAQPSAPSTAPITP).

Belongs to the LpoA family. As to quaternary structure, interacts with PBP1a.

Its subcellular location is the cell outer membrane. In terms of biological role, regulator of peptidoglycan synthesis that is essential for the function of penicillin-binding protein 1A (PBP1a). This Serratia proteamaculans (strain 568) protein is Penicillin-binding protein activator LpoA.